A 213-amino-acid polypeptide reads, in one-letter code: Orotate phosphoribosyltransferase (213 aa).

Lysine 26 is a binding site for 5-phospho-alpha-D-ribose 1-diphosphate. Position 34-35 (34-35 (FF)) interacts with orotate. Residues 72–73 (YK), arginine 98, lysine 99, lysine 102, histidine 104, and 123–131 (DDVISAGTS) each bind 5-phospho-alpha-D-ribose 1-diphosphate. Orotate contacts are provided by serine 127 and arginine 155.

This sequence belongs to the purine/pyrimidine phosphoribosyltransferase family. PyrE subfamily. In terms of assembly, homodimer. Mg(2+) is required as a cofactor.

It catalyses the reaction orotidine 5'-phosphate + diphosphate = orotate + 5-phospho-alpha-D-ribose 1-diphosphate. The protein operates within pyrimidine metabolism; UMP biosynthesis via de novo pathway; UMP from orotate: step 1/2. Catalyzes the transfer of a ribosyl phosphate group from 5-phosphoribose 1-diphosphate to orotate, leading to the formation of orotidine monophosphate (OMP). The chain is Orotate phosphoribosyltransferase from Laribacter hongkongensis (strain HLHK9).